The sequence spans 220 residues: Adenylate kinase (220 aa).

ATP is bound at residue 10-15 (GSGKST). The NMP stretch occupies residues 30–59 (ASGDIIRAEIKARTPLGIEMERYLSRGDLI). Residues arginine 36, 57 to 59 (DLI), 83 to 86 (GYPR), and glutamine 90 contribute to the AMP site. Positions 124 to 161 (GRRICSKCGAVYHVEFNPPKVPGKCDICGGELIQRPDD) are LID. Arginine 125 provides a ligand contact to ATP. Cysteine 128 and cysteine 131 together coordinate Zn(2+). 134 to 135 (VY) contacts ATP. 2 residues coordinate Zn(2+): cysteine 148 and cysteine 151. 2 residues coordinate AMP: arginine 158 and arginine 169. Glycine 197 contacts ATP.

The protein belongs to the adenylate kinase family. Monomer.

Its subcellular location is the cytoplasm. It catalyses the reaction AMP + ATP = 2 ADP. It functions in the pathway purine metabolism; AMP biosynthesis via salvage pathway; AMP from ADP: step 1/1. Functionally, catalyzes the reversible transfer of the terminal phosphate group between ATP and AMP. Plays an important role in cellular energy homeostasis and in adenine nucleotide metabolism. The sequence is that of Adenylate kinase from Pyrococcus abyssi (strain GE5 / Orsay).